The following is a 215-amino-acid chain: A-type ATP synthase subunit E (215 aa).

Belongs to the V-ATPase E subunit family. In terms of assembly, has multiple subunits with at least A(3), B(3), C, D, E, F, H, I and proteolipid K(x).

The protein resides in the cell membrane. Functionally, component of the A-type ATP synthase that produces ATP from ADP in the presence of a proton gradient across the membrane. This chain is A-type ATP synthase subunit E, found in Thermofilum pendens (strain DSM 2475 / Hrk 5).